Here is a 545-residue protein sequence, read N- to C-terminus: MSYSIGIDYGTASGRVFLINTTNGQVVSKFVKPYTHGVIESELNGLKIPHTYALQNSNDYLEIMEEGISYIVRESKIDPVNIVGIGIDFTSSTIIFTDENLNPVHNLKQFKNNPHAYVKLWKHHGAYKEAEKLYQTAIENNNKWLGHYGYNVSSEWMIPKIMEVMNRAPEIMEKTAYIMEAGDWIVNKLTNKNVRSNCGLGFKAFWEEETGFHYDLFDKIDPKLSKVIQDKVSAPVVNIGEVVGKLDDKMAQKLGLSKETMVSPFIIDAHASLLGIGSEKDKEMTMVMGTSTCHLMLNEKQHQVPGISGSVKGAIIPELFAYEAGQSAVGDLFEYVAKQAPKSYVDEAANRNMTVFELMNEKIKHQMPGESGLIALDWHNGNRSVLSDSNLTGCIFGLTLQTKHEDIYRAYLEATAFGTKMIMQQYQDWHMEVEKVFACGGIPKKNAVMMDIYANVLNKKLIVMDSEYAPAIGAAILGAVSGGAHNSINDAVDAMKEPILYEINPEAEKVQRYETLFKAYKALHDIHGYKKANIMKDIQSLRVEG.

Belongs to the ribulokinase family.

It catalyses the reaction D-ribulose + ATP = D-ribulose 5-phosphate + ADP + H(+). The enzyme catalyses L-ribulose + ATP = L-ribulose 5-phosphate + ADP + H(+). It participates in carbohydrate degradation; L-arabinose degradation via L-ribulose; D-xylulose 5-phosphate from L-arabinose (bacterial route): step 2/3. In Staphylococcus aureus (strain Mu3 / ATCC 700698), this protein is Ribulokinase.